The chain runs to 750 residues: MLSSRWWPSSWGILGLGPRSPPRGSQLCALYAFTYTGADGQQVSLAEGDRFLLLRKTNSDWWLARRLEAPSTSRPIFVPAAYMIEESIPSQSPTTVIPGQLLWTPGPKLFHGSLEELSQALPSRAQASSEQPPPLPRKMCRSVSTDNLSPSLLKPFQEGPSGRSLSQEDLPSEASASTAGPQPLMSEPPVYCNLVDLRRCPRSPPPGPACPLLQRLDAWEQHLDPNSGRCFYINSLTGCKSWKPPRRSRSETNPGSMEGTQTLKRNNDVLQPQAKGFRSDTGTPEPLDPQGSLSLSQRTSQLDPPALQAPRPLPQLLDDPHEVEKSGLLNMTKIAQGGRKLRKNWGPSWVVLTGNSLVFYREPPPTAPSSGWGPAGSRPESSVDLRGAALAHGRHLSSRRNVLHIRTIPGHEFLLQSDHETELRAWHRALRTVIERLVRWVEARREAPTGRDQGSGDRENPLELRLSGSGPAELSAGEDEEEESELVSKPLLRLSSRRSSIRGPEGTEQNRVRNKLKRLIAKRPPLQSLQERGLLRDQVFGCQLESLCQREGDTVPSFLRLCIAAVDKRGLDVDGIYRVSGNLAVVQKLRFLVDRERAVTSDGRYVFPEQPGQEGRLDLDSTEWDDIHVVTGALKLFLRELPQPLVPPLLLPHFRAALALSESEQCLSQIQELIGSMPKPNHDTLRYLLEHLCRVIAHSDKNRMTPHNLGIVFGPTLFRPEQETSDPAAHALYPGQLVQLMLTNFTSLFP.

Residues 22 to 88 (PRGSQLCALY…PAAYMIEESI (67 aa)) enclose the SH3 domain. Disordered regions lie at residues 120–187 (ALPS…LMSE) and 242–319 (WKPP…LLDD). Residues 163-180 (RSLSQEDLPSEASASTAG) are compositionally biased toward polar residues. The 35-residue stretch at 213-247 (LQRLDAWEQHLDPNSGRCFYINSLTGCKSWKPPRR) folds into the WW domain. Composition is skewed to polar residues over residues 251–270 (ETNPGSMEGTQTLKRNNDVL) and 291–300 (GSLSLSQRTS). A compositionally biased stretch (low complexity) spans 301–317 (QLDPPALQAPRPLPQLL). One can recognise a PH domain in the interval 322–435 (EVEKSGLLNM…WHRALRTVIE (114 aa)). Lipid binding stretches follow at residues 342–345 (RKNW), 397–399 (SSR), and 432–669 (TVIE…CLSQ). Basic and acidic residues predominate over residues 446-462 (EAPTGRDQGSGDRENPL). Residues 446–488 (EAPTGRDQGSGDRENPLELRLSGSGPAELSAGEDEEEESELVS) form a disordered region. Residue Ser475 is modified to Phosphoserine. Over residues 476–485 (AGEDEEEESE) the composition is skewed to acidic residues. The residue at position 500 (Ser500) is a Phosphoserine. Residues 542-749 (CQLESLCQRE…LMLTNFTSLF (208 aa)) form the Rho-GAP domain.

As to quaternary structure, interacts with FASLG. As to expression, predominantly expressed in peripheral blood leukocytes, spleen, and thymus.

Functionally, GTPase activator for the Rho-type GTPases by converting them to an inactive GDP-bound state. Has a substantial GAP activity toward CDC42 and RAC1 and less toward RHOA. Has a role in regulating adhesion of hematopoietic cells to the extracellular matrix. Binds phosphoinositides, and has the highest affinity for phosphatidylinositol 3,4,5-trisphosphate, followed by phosphatidylinositol 3,4-bisphosphate and phosphatidylinositol 4,5-bisphosphate. The protein is Rho GTPase-activating protein 9 (ARHGAP9) of Homo sapiens (Human).